The chain runs to 390 residues: S-adenosylmethionine synthase 4 (390 aa).

E9 is a Mg(2+) binding site. H15 serves as a coordination point for ATP. E43 lines the K(+) pocket. L-methionine-binding residues include E56 and Q99. Residues D167–K169, S235–F238, D246, R252–K253, A269, K273, and K277 each bind ATP. Residue D246 participates in L-methionine binding. K277 is a binding site for L-methionine.

It belongs to the AdoMet synthase family. In terms of assembly, homotetramer. The cofactor is Mn(2+). Mg(2+) serves as cofactor. It depends on Co(2+) as a cofactor. Requires K(+) as cofactor. As to expression, mostly expressed in flowers, seedpods and roots, and, to a lower extent, in stems and leaves.

It is found in the cytoplasm. It carries out the reaction L-methionine + ATP + H2O = S-adenosyl-L-methionine + phosphate + diphosphate. It participates in amino-acid biosynthesis; S-adenosyl-L-methionine biosynthesis; S-adenosyl-L-methionine from L-methionine: step 1/1. Catalyzes the formation of S-adenosylmethionine from methionine and ATP. The reaction comprises two steps that are both catalyzed by the same enzyme: formation of S-adenosylmethionine (AdoMet) and triphosphate, and subsequent hydrolysis of the triphosphate. The chain is S-adenosylmethionine synthase 4 (MSAMS4) from Brassica juncea (Indian mustard).